A 198-amino-acid polypeptide reads, in one-letter code: Phycocyanobilin lyase CpcT homolog (198 aa).

Belongs to the CpcT/CpeT biliprotein lyase family.

Functionally, covalently attaches a chromophore to Cys residue(s) of phycobiliproteins. In vitro is not seen to act as a chromophore lyase for ApcA1, ApcA2, ApcB, ApcD, ApcF, CpcB or PecB, the lyase activity is therefore unsure. The chain is Phycocyanobilin lyase CpcT homolog (cpcT2) from Nostoc sp. (strain PCC 7120 / SAG 25.82 / UTEX 2576).